A 239-amino-acid chain; its full sequence is Pyridoxine 5'-phosphate synthase (239 aa).

Asn-7 contributes to the 3-amino-2-oxopropyl phosphate binding site. 9–10 (DH) contributes to the 1-deoxy-D-xylulose 5-phosphate binding site. Arg-18 serves as a coordination point for 3-amino-2-oxopropyl phosphate. Catalysis depends on His-43, which acts as the Proton acceptor. Residues Arg-45 and His-50 each coordinate 1-deoxy-D-xylulose 5-phosphate. Glu-70 serves as the catalytic Proton acceptor. Thr-100 provides a ligand contact to 1-deoxy-D-xylulose 5-phosphate. The active-site Proton donor is His-191. 3-amino-2-oxopropyl phosphate-binding positions include Gly-192 and 213 to 214 (GH).

The protein belongs to the PNP synthase family. As to quaternary structure, homooctamer; tetramer of dimers.

Its subcellular location is the cytoplasm. It catalyses the reaction 3-amino-2-oxopropyl phosphate + 1-deoxy-D-xylulose 5-phosphate = pyridoxine 5'-phosphate + phosphate + 2 H2O + H(+). Its pathway is cofactor biosynthesis; pyridoxine 5'-phosphate biosynthesis; pyridoxine 5'-phosphate from D-erythrose 4-phosphate: step 5/5. Catalyzes the complicated ring closure reaction between the two acyclic compounds 1-deoxy-D-xylulose-5-phosphate (DXP) and 3-amino-2-oxopropyl phosphate (1-amino-acetone-3-phosphate or AAP) to form pyridoxine 5'-phosphate (PNP) and inorganic phosphate. In Synechococcus sp. (strain JA-2-3B'a(2-13)) (Cyanobacteria bacterium Yellowstone B-Prime), this protein is Pyridoxine 5'-phosphate synthase.